The chain runs to 363 residues: Ribosomal RNA large subunit methyltransferase M (363 aa).

S-adenosyl-L-methionine-binding positions include Ser-194, 227–230, Asp-246, Asp-266, and Asp-284; that span reads CPGG. Lys-313 (proton acceptor) is an active-site residue.

The protein belongs to the class I-like SAM-binding methyltransferase superfamily. RNA methyltransferase RlmE family. RlmM subfamily. As to quaternary structure, monomer.

The protein localises to the cytoplasm. It catalyses the reaction cytidine(2498) in 23S rRNA + S-adenosyl-L-methionine = 2'-O-methylcytidine(2498) in 23S rRNA + S-adenosyl-L-homocysteine + H(+). Functionally, catalyzes the 2'-O-methylation at nucleotide C2498 in 23S rRNA. The polypeptide is Ribosomal RNA large subunit methyltransferase M (Haemophilus influenzae (strain PittGG)).